We begin with the raw amino-acid sequence, 922 residues long: Lysine-specific demethylase 7A (922 aa).

A PHD-type zinc finger spans residues 6 to 57 (PVYCVCRQPYDVSRFMIECDICKDWFHSSCVKVEEHQAADIDLYHCPNCEVL). Positions 199 to 355 (FSDTKMADLV…MQLRCYEMEK (157 aa)) constitute a JmjC domain. Thr248 contributes to the substrate binding site. Fe cation contacts are provided by His251 and Asp253. Lys268 is a binding site for substrate. His323 is a binding site for Fe cation. Disordered regions lie at residues 445-490 (EEEG…TKTP), 565-607 (RSLY…TQKP), 622-711 (GSSE…EQEA), 754-773 (GKEH…HHVK), and 872-902 (LHPT…MATA). The span at 473-483 (HHSGRKARRLR) shows a compositional bias: basic residues. Over residues 648–666 (ESESSGDDDDEEEEEEEER) the composition is skewed to acidic residues. Basic and acidic residues-rich tracts occupy residues 667 to 683 (QEPI…RRLP) and 691 to 701 (PDHDSPQKREC).

This sequence belongs to the JHDM1 histone demethylase family. JHDM1D subfamily. Fe(2+) is required as a cofactor.

It localises to the nucleus. In terms of biological role, histone demethylase required for brain development. Specifically demethylates dimethylated 'Lys-9' and 'Lys-27' (H3K9me2 and H3K27me2, respectively) of histone H3 and monomethylated histone H4 'Lys-20' residue (H4K20Me1), thereby playing a central role in histone code. This chain is Lysine-specific demethylase 7A (kdm7a), found in Xenopus tropicalis (Western clawed frog).